Reading from the N-terminus, the 304-residue chain is Ornithine carbamoyltransferase (304 aa).

Carbamoyl phosphate contacts are provided by residues 53–56 (STRT), Gln80, Arg104, and 131–134 (HPCQ). L-ornithine-binding positions include Asn162, Asp222, and 226–227 (SM). Carbamoyl phosphate is bound by residues 261-262 (CL) and Arg289.

This sequence belongs to the aspartate/ornithine carbamoyltransferase superfamily. OTCase family.

It localises to the cytoplasm. It carries out the reaction carbamoyl phosphate + L-ornithine = L-citrulline + phosphate + H(+). The protein operates within amino-acid biosynthesis; L-arginine biosynthesis; L-arginine from L-ornithine and carbamoyl phosphate: step 1/3. Functionally, reversibly catalyzes the transfer of the carbamoyl group from carbamoyl phosphate (CP) to the N(epsilon) atom of ornithine (ORN) to produce L-citrulline. This is Ornithine carbamoyltransferase from Rhizobium johnstonii (strain DSM 114642 / LMG 32736 / 3841) (Rhizobium leguminosarum bv. viciae).